Reading from the N-terminus, the 256-residue chain is Small ribosomal subunit protein uS2 (256 aa).

It belongs to the universal ribosomal protein uS2 family.

This Streptococcus equi subsp. equi (strain 4047) protein is Small ribosomal subunit protein uS2.